The chain runs to 396 residues: Schizokinen exporter SchE (396 aa).

Positions 1-25 are cleaved as a signal peptide; the sequence is MLPKLILLATLYISQFIPTTFFIQA. At 26–39 the chain is on the cytoplasmic side; that stretch reads LPVFMRQQKMSLDV. A helical transmembrane segment spans residues 40-60; that stretch reads IGFLGLLILPSGLKFLWSPFI. Residues 61-73 lie on the Periplasmic side of the membrane; that stretch reads DRYRLGKLGHYRG. The helical transmembrane segment at 74–94 threads the bilayer; the sequence is WIICFQLLLISTMLVTAFIDI. At 95 to 104 the chain is on the cytoplasmic side; sequence QDNLNAFLTC. The chain crosses the membrane as a helical span at residues 105 to 127; the sequence is MFLASLFSSSQDIATDALAVNLL. Residues 128–137 are Periplasmic-facing; sequence EPQERGLGNA. Residues 138 to 158 traverse the membrane as a helical segment; that stretch reads IQSGGNIFGAIIGGGVMLILL. Topologically, residues 159–162 are cytoplasmic; it reads DKIG. Residues 163–183 traverse the membrane as a helical segment; it reads WRYSLITLSIFMLINLVPILI. The Periplasmic segment spans residues 184–214; sequence YREKSQHQLENSTFFRSYFQPFISFLSRPKA. A helical membrane pass occupies residues 215–235; sequence LPWLFVVLLYMMGDSVTSLMI. At 236 to 251 the chain is on the cytoplasmic side; the sequence is RPLLVDRGLSLPDIGW. A helical transmembrane segment spans residues 252 to 272; that stretch reads ILGIVSYSARIVSALIAGLVI. The Periplasmic portion of the chain corresponds to 273 to 281; that stretch reads VKLGRIKSL. Residues 282–302 form a helical membrane-spanning segment; sequence IIFGFIADLTTLLYIIPAIGV. Over 303-304 the chain is Cytoplasmic; it reads SS. Residues 305 to 325 form a helical membrane-spanning segment; that stretch reads LLVLYTVCIIVNATQSMAYTA. Over 326-346 the chain is Periplasmic; sequence LLSAMMDKCEKNTAATDYTMQ. 2 helical membrane-spanning segments follow: residues 347–367 and 368–388; these read VSVM…LATT and MGYS…VFLI. The Periplasmic portion of the chain corresponds to 389–396; the sequence is TQEYGVSS.

This sequence belongs to the major facilitator superfamily.

It localises to the cell inner membrane. Functionally, involved in the TolC-like protein HgdD-dependent secretion of schizokinen, a dihydroxamate-type siderophore. Transports schizokinen from the cytoplasm to the periplasm. This Nostoc sp. (strain PCC 7120 / SAG 25.82 / UTEX 2576) protein is Schizokinen exporter SchE.